Consider the following 404-residue polypeptide: Cysteine desulfurase IscS (404 aa).

Residues 75–76 (AT), asparagine 155, glutamine 183, and 203–205 (SAH) each bind pyridoxal 5'-phosphate. At lysine 206 the chain carries N6-(pyridoxal phosphate)lysine. Threonine 243 contacts pyridoxal 5'-phosphate. The active-site Cysteine persulfide intermediate is the cysteine 328. Cysteine 328 serves as a coordination point for [2Fe-2S] cluster.

This sequence belongs to the class-V pyridoxal-phosphate-dependent aminotransferase family. NifS/IscS subfamily. In terms of assembly, homodimer. Forms a heterotetramer with IscU, interacts with other sulfur acceptors. Requires pyridoxal 5'-phosphate as cofactor.

It is found in the cytoplasm. It catalyses the reaction (sulfur carrier)-H + L-cysteine = (sulfur carrier)-SH + L-alanine. The protein operates within cofactor biosynthesis; iron-sulfur cluster biosynthesis. Functionally, master enzyme that delivers sulfur to a number of partners involved in Fe-S cluster assembly, tRNA modification or cofactor biosynthesis. Catalyzes the removal of elemental sulfur atoms from cysteine to produce alanine. Functions as a sulfur delivery protein for Fe-S cluster synthesis onto IscU, an Fe-S scaffold assembly protein, as well as other S acceptor proteins. In Ectopseudomonas mendocina (strain ymp) (Pseudomonas mendocina), this protein is Cysteine desulfurase IscS.